Here is a 159-residue protein sequence, read N- to C-terminus: Nucleotide-binding protein Pmen_0939 (159 aa).

It belongs to the YajQ family.

Functionally, nucleotide-binding protein. The sequence is that of Nucleotide-binding protein Pmen_0939 from Ectopseudomonas mendocina (strain ymp) (Pseudomonas mendocina).